Reading from the N-terminus, the 294-residue chain is ATP phosphoribosyltransferase (294 aa).

It belongs to the ATP phosphoribosyltransferase family. Long subfamily. Mg(2+) is required as a cofactor.

The protein localises to the cytoplasm. It catalyses the reaction 1-(5-phospho-beta-D-ribosyl)-ATP + diphosphate = 5-phospho-alpha-D-ribose 1-diphosphate + ATP. It participates in amino-acid biosynthesis; L-histidine biosynthesis; L-histidine from 5-phospho-alpha-D-ribose 1-diphosphate: step 1/9. Its activity is regulated as follows. Feedback inhibited by histidine. In terms of biological role, catalyzes the condensation of ATP and 5-phosphoribose 1-diphosphate to form N'-(5'-phosphoribosyl)-ATP (PR-ATP). Has a crucial role in the pathway because the rate of histidine biosynthesis seems to be controlled primarily by regulation of HisG enzymatic activity. The chain is ATP phosphoribosyltransferase from Chlorobium luteolum (strain DSM 273 / BCRC 81028 / 2530) (Pelodictyon luteolum).